A 394-amino-acid polypeptide reads, in one-letter code: MDSQGRKVVVCDNGTGFVKCGYAGSNFPEHIFPALVGRPIIRSTTKVGNIEIKDLMVGDEASELRSMLEVNYPMENGIVRNWDDMKHLWDYTFGPEKLNIDTRNCKILLTEPPMNPTKNREKIVEVMFETYQFSGVYVAIQAVLTLYAQGLLTGVVVDSGDGVTHICPVYEGFSLPHLTRRLDIAGRDITRYLIKLLLLRGYAFNHSADFETVRMIKEKLCYVGYNIEQEQKLALETTVLVESYTLPDGRIIKVGGERFEAPEALFQPHLINVEGVGVAELLFNTIQAADIDTRSEFYKHIVLSGGSTMYPGLPSRLERELKQLYLERVLKGDVEKLSKFKIRIEDPPRRKHMVFLGGAVLADIMKDKDNFWMTRQEYQEKGVRVLEKLGVTVR.

Met1 is subject to N-acetylmethionine. ATP is bound by residues Gly160 to Gly162 and Arg214 to Glu218. An N6-acetyllysine modification is found at Lys299. Gly305–Tyr310 provides a ligand contact to ATP. Position 322 is an N6-acetyllysine (Lys322).

Belongs to the actin family. ARP2 subfamily. Component of the Arp2/3 complex composed of ACTR2/ARP2, ACTR3/ARP3, ARPC1B/p41-ARC, ARPC2/p34-ARC, ARPC3/p21-ARC, ARPC4/p20-ARC and ARPC5/p16-ARC. Interacts with AVIL.

It is found in the cytoplasm. It localises to the cytoskeleton. The protein resides in the cell projection. The protein localises to the nucleus. In terms of biological role, ATP-binding component of the Arp2/3 complex, a multiprotein complex that mediates actin polymerization upon stimulation by nucleation-promoting factor (NPF). The Arp2/3 complex mediates the formation of branched actin networks in the cytoplasm, providing the force for cell motility. Seems to contact the pointed end of the daughter actin filament. In podocytes, required for the formation of lamellipodia downstream of AVIL and PLCE1 regulation. In addition to its role in the cytoplasmic cytoskeleton, the Arp2/3 complex also promotes actin polymerization in the nucleus, thereby regulating gene transcription and repair of damaged DNA. The Arp2/3 complex promotes homologous recombination (HR) repair in response to DNA damage by promoting nuclear actin polymerization, leading to drive motility of double-strand breaks (DSBs). This is Actin-related protein 2 (ACTR2) from Bos taurus (Bovine).